The chain runs to 145 residues: UPF0735 ACT domain-containing protein CPE1414 (145 aa).

An ACT domain is found at 69 to 144 (IFNMVVTHEK…GVEKVEFVAM (76 aa)).

The protein belongs to the UPF0735 family.

In Clostridium perfringens (strain 13 / Type A), this protein is UPF0735 ACT domain-containing protein CPE1414.